A 179-amino-acid polypeptide reads, in one-letter code: ATP synthase subunit delta (179 aa).

This sequence belongs to the ATPase delta chain family. In terms of assembly, F-type ATPases have 2 components, F(1) - the catalytic core - and F(0) - the membrane proton channel. F(1) has five subunits: alpha(3), beta(3), gamma(1), delta(1), epsilon(1). F(0) has three main subunits: a(1), b(2) and c(10-14). The alpha and beta chains form an alternating ring which encloses part of the gamma chain. F(1) is attached to F(0) by a central stalk formed by the gamma and epsilon chains, while a peripheral stalk is formed by the delta and b chains.

It is found in the cell membrane. Functionally, f(1)F(0) ATP synthase produces ATP from ADP in the presence of a proton or sodium gradient. F-type ATPases consist of two structural domains, F(1) containing the extramembraneous catalytic core and F(0) containing the membrane proton channel, linked together by a central stalk and a peripheral stalk. During catalysis, ATP synthesis in the catalytic domain of F(1) is coupled via a rotary mechanism of the central stalk subunits to proton translocation. This protein is part of the stalk that links CF(0) to CF(1). It either transmits conformational changes from CF(0) to CF(1) or is implicated in proton conduction. The sequence is that of ATP synthase subunit delta from Ureaplasma urealyticum serovar 10 (strain ATCC 33699 / Western).